Here is a 461-residue protein sequence, read N- to C-terminus: Fumarate hydratase class II (461 aa).

Substrate is bound by residues 97-99, R125, 128-131, 138-140, and T186; these read SGT, HPND, and SSN. Residue H187 is the Proton donor/acceptor of the active site. S317 is a catalytic residue. Substrate is bound by residues S318 and 323–325; that span reads KVN.

It belongs to the class-II fumarase/aspartase family. Fumarase subfamily. In terms of assembly, homotetramer.

It localises to the cytoplasm. The catalysed reaction is (S)-malate = fumarate + H2O. Its pathway is carbohydrate metabolism; tricarboxylic acid cycle; (S)-malate from fumarate: step 1/1. Functionally, involved in the TCA cycle. Catalyzes the stereospecific interconversion of fumarate to L-malate. In Ralstonia nicotianae (strain ATCC BAA-1114 / GMI1000) (Ralstonia solanacearum), this protein is Fumarate hydratase class II.